Consider the following 348-residue polypeptide: Eukaryotic translation initiation factor 3 subunit F (348 aa).

The 137-residue stretch at Val30–Gly166 folds into the MPN domain. Positions Ser312–Gly327 are enriched in gly residues. The tract at residues Ser312–Ala348 is disordered. Low complexity predominate over residues Gly328 to Asn341.

It belongs to the eIF-3 subunit F family. Component of the eukaryotic translation initiation factor 3 (eIF-3) complex.

It localises to the cytoplasm. Component of the eukaryotic translation initiation factor 3 (eIF-3) complex, which is involved in protein synthesis of a specialized repertoire of mRNAs and, together with other initiation factors, stimulates binding of mRNA and methionyl-tRNAi to the 40S ribosome. The eIF-3 complex specifically targets and initiates translation of a subset of mRNAs involved in cell proliferation. The chain is Eukaryotic translation initiation factor 3 subunit F from Coccidioides immitis (strain RS) (Valley fever fungus).